We begin with the raw amino-acid sequence, 132 residues long: Putative esterase Ta0293 (132 aa).

The protein belongs to the thioesterase PaaI family.

The polypeptide is Putative esterase Ta0293 (Thermoplasma acidophilum (strain ATCC 25905 / DSM 1728 / JCM 9062 / NBRC 15155 / AMRC-C165)).